The following is a 189-amino-acid chain: uncharacterized protein (189 aa).

The first 19 residues, 1–19, serve as a signal peptide directing secretion; sequence MNKLTILFLILALISVIYA. Residues 24–189 form a disordered region; it reads PSSSEDSSSN…GSGSSGTVYY (166 aa). A compositionally biased stretch (low complexity) spans 25 to 69; sequence SSSEDSSSNDSNSQVTGSQSYSGSQSDSNSGSESHTINTGSSYSG. Gly residues predominate over residues 70–101; sequence SGSGSSGISGGSGSGSGSGSGSGSGSGSGSGA. Residues 102–142 are compositionally biased toward low complexity; the sequence is VSGSQSGSGAVSGSQSGSGAVSGSQSGVQTGSQSGAGSASG. Over residues 144–157 the composition is skewed to polar residues; that stretch reads FTGNPSGSQSQEIN. The segment covering 165-183 has biased composition (gly residues); the sequence is SGSGAPTGAATGSGSGSGS.

This is an uncharacterized protein from Dictyostelium discoideum (Social amoeba).